A 131-amino-acid polypeptide reads, in one-letter code: MAGVKALVALSFSGAIGLTFLMLGCALEDYGVYWPLFVLVFHALSPIPHFIAKRATYDSDATSSACRELAYFFTTGIVVSAFGFPVILARVAVIKWGACGLVLAGNAVIFLTIQGFFLVFGRGDDFSWEQW.

4 consecutive transmembrane segments (helical) span residues 7-27 (LVALSFSGAIGLTFLMLGCAL), 32-52 (VYWPLFVLVFHALSPIPHFIA), 69-89 (LAYFFTTGIVVSAFGFPVILA), and 100-120 (GLVLAGNAVIFLTIQGFFLVF).

The protein belongs to the OB-RGRP/VPS55 family. In terms of assembly, interacts with LEPR. Interacts with RAB13.

The protein resides in the golgi apparatus membrane. Its subcellular location is the endosome membrane. Negatively regulates leptin receptor (LEPR) cell surface expression, and thus decreases response to leptin/LEP. Negatively regulates growth hormone (GH) receptor cell surface expression in liver. May play a role in liver resistance to GH during periods of reduced nutrient availability. This chain is Leptin receptor gene-related protein (LEPROT), found in Sus scrofa (Pig).